The following is a 521-amino-acid chain: MLDANLKTQLKAYLEKVSQPFEIVASLDDSDKSRELLGLLQDIVGLTDKITLKTDGSDARKPSFSLNRPGADIGLRFAGIPMGHEFTSLVLALLQVGGHPSKLDADVIEQVKGIEGTFEFETYFSLSCQNCPDVVQALNLMAVLNPNIRHVAIDGALFQDEVEARQIMSVPSIYLNGEVFGQGRMGVEEILAKIDTGAAARDAEKLTARDAFDVLVVGGGPAGAAAAIYAARKGIRTGVAAERFGGQVLDTMAIENFISVQETEGPKLARALEEHVRHYEVDIMNLQRASKLVPAKNAGELHEVRFESGGSLKAKTLILATGARWREMGVPGEQEYKAKGVCFCPHCDGPLFKGKRVAVIGGGNSGVEAAIDLAGIVAHVTLLEFDSKLRADAVLQRKLYSLPNVEVITSALTSEVKGDGQKVTGLVYKDRNSEEFKSIELEGIFVQIGLLPNTEWLKGSVELSPRGEIIVDARGETSLPGIFAAGDVTTVPYKQIVIAVGEGAKASLSAFDHLIRTSAPE.

FAD is bound at residue 213 to 228; that stretch reads DVLVVGGGPAGAAAAI. A disulfide bridge connects residues C344 and C347. 356–370 is a binding site for NAD(+); sequence RVAVIGGGNSGVEAA. Residue 477–487 coordinates FAD; it reads TSLPGIFAAGD.

This sequence belongs to the class-II pyridine nucleotide-disulfide oxidoreductase family. As to quaternary structure, homodimer. Requires FAD as cofactor.

Its function is as follows. Serves to protect the cell against DNA damage by alkyl hydroperoxides. It can use either NADH or NADPH as electron donor for direct reduction of redox dyes or of alkyl hydroperoxides when combined with the AhpC protein. The protein is Alkyl hydroperoxide reductase subunit F (ahpF) of Pseudomonas aeruginosa (strain ATCC 15692 / DSM 22644 / CIP 104116 / JCM 14847 / LMG 12228 / 1C / PRS 101 / PAO1).